Here is a 646-residue protein sequence, read N- to C-terminus: Phosphomethylpyrimidine synthase (646 aa).

Substrate is bound by residues asparagine 235, methionine 264, tyrosine 293, histidine 329, serine 349–glycine 351, aspartate 390–arginine 393, and glutamate 429. Residue histidine 433 participates in Zn(2+) binding. Tyrosine 456 serves as a coordination point for substrate. Zn(2+) is bound at residue histidine 497. Cysteine 577, cysteine 580, and cysteine 585 together coordinate [4Fe-4S] cluster. Positions lysine 624–glutamate 646 are disordered.

Belongs to the ThiC family. Homodimer. The cofactor is [4Fe-4S] cluster.

The catalysed reaction is 5-amino-1-(5-phospho-beta-D-ribosyl)imidazole + S-adenosyl-L-methionine = 4-amino-2-methyl-5-(phosphooxymethyl)pyrimidine + CO + 5'-deoxyadenosine + formate + L-methionine + 3 H(+). The protein operates within cofactor biosynthesis; thiamine diphosphate biosynthesis. In terms of biological role, catalyzes the synthesis of the hydroxymethylpyrimidine phosphate (HMP-P) moiety of thiamine from aminoimidazole ribotide (AIR) in a radical S-adenosyl-L-methionine (SAM)-dependent reaction. The chain is Phosphomethylpyrimidine synthase from Vibrio parahaemolyticus serotype O3:K6 (strain RIMD 2210633).